The following is a 386-amino-acid chain: Succinate--CoA ligase [ADP-forming] subunit beta (386 aa).

Positions Lys-9–Glu-244 constitute an ATP-grasp domain. ATP is bound by residues Lys-46, Gly-53–Gly-55, Glu-99, Ser-102, and Glu-107. Mg(2+)-binding residues include Asn-199 and Asp-213. Substrate-binding positions include Asn-264 and Gly-321–Met-323.

The protein belongs to the succinate/malate CoA ligase beta subunit family. Heterotetramer of two alpha and two beta subunits. Mg(2+) is required as a cofactor.

The catalysed reaction is succinate + ATP + CoA = succinyl-CoA + ADP + phosphate. It catalyses the reaction GTP + succinate + CoA = succinyl-CoA + GDP + phosphate. It functions in the pathway carbohydrate metabolism; tricarboxylic acid cycle; succinate from succinyl-CoA (ligase route): step 1/1. In terms of biological role, succinyl-CoA synthetase functions in the citric acid cycle (TCA), coupling the hydrolysis of succinyl-CoA to the synthesis of either ATP or GTP and thus represents the only step of substrate-level phosphorylation in the TCA. The beta subunit provides nucleotide specificity of the enzyme and binds the substrate succinate, while the binding sites for coenzyme A and phosphate are found in the alpha subunit. The protein is Succinate--CoA ligase [ADP-forming] subunit beta of Exiguobacterium sp. (strain ATCC BAA-1283 / AT1b).